The primary structure comprises 429 residues: Phosphoribosylamine--glycine ligase (429 aa).

The region spanning 109 to 316 (KDFLARHHIP…LVELCLAACD (208 aa)) is the ATP-grasp domain. 135–196 (LREKGAPIVV…EEFLDGEEAS (62 aa)) serves as a coordination point for ATP. Residues 209–231 (MATSQDHKRVGENDTGLNTGGMG) form a disordered region. Positions 286 and 288 each coordinate Mg(2+).

The protein belongs to the GARS family. The cofactor is Mg(2+). Requires Mn(2+) as cofactor.

It carries out the reaction 5-phospho-beta-D-ribosylamine + glycine + ATP = N(1)-(5-phospho-beta-D-ribosyl)glycinamide + ADP + phosphate + H(+). Its pathway is purine metabolism; IMP biosynthesis via de novo pathway; N(1)-(5-phospho-D-ribosyl)glycinamide from 5-phospho-alpha-D-ribose 1-diphosphate: step 2/2. This is Phosphoribosylamine--glycine ligase from Pasteurella multocida (strain Pm70).